The following is a 397-amino-acid chain: Lymphoid enhancer-binding factor 1 (397 aa).

The interval 1–60 (MPQLSGGGGGGDPELCATDEMIPFKDEGDPQKEKIFAEISHPEEEGDLADIKSSLVNESE) is CTNNB1-binding. A Glycyl lysine isopeptide (Lys-Gly) (interchain with G-Cter in SUMO) cross-link involves residue Lys25. Residues 38–102 (EISHPEEEGD…KHPDGGLYNK (65 aa)) form a disordered region. Positions 80 to 96 (PYHDKAREHPDDGKHPD) are enriched in basic and acidic residues. Position 130 is a phosphoserine (Ser130). Thr153 carries the phosphothreonine; by NLK modification. Ser164 carries the post-translational modification Phosphoserine; by NLK. Disordered stretches follow at residues 164–190 (SPGSHPSHIPSEVNPKQGMSRHPPAPE) and 266–296 (VKQEHPHTDSDLMHVKPEHEQRKEQEPKRPH). Lys267 participates in a covalent cross-link: Glycyl lysine isopeptide (Lys-Gly) (interchain with G-Cter in SUMO). A compositionally biased stretch (basic and acidic residues) spans 267–294 (KQEHPHTDSDLMHVKPEHEQRKEQEPKR). Residues 297 to 365 (IKKPLNAFML…LHMQLYPGWS (69 aa)) constitute a DNA-binding region (HMG box). The segment at 367–397 (RDNYGKKKKRKREKLQESTSGTGPRMTAAYI) is disordered.

It belongs to the TCF/LEF family. Binds the armadillo repeat of CTNNB1 and forms a stable complex. Interacts with TLE1, PIASG, ALYREF/THOC4, EP300, MDFI and MDFIC. Interacts with DAZAP2. Phosphorylated at Thr-153 and/or Ser-164 by NLK. Phosphorylation by NLK at these sites represses LEF1-mediated transcriptional activation of target genes of the canonical Wnt signaling pathway.

The protein resides in the nucleus. In terms of biological role, transcription factor that binds DNA in a sequence-specific manner. Participates in the Wnt signaling pathway. Activates transcription of target genes in the presence of CTNNB1 and EP300. PIASG antagonizes both Wnt-dependent and Wnt-independent activation by LEF1. TLE1, TLE2, TLE3 and TLE4 repress transactivation mediated by LEF1 and CTNNB1. Regulates T-cell receptor alpha enhancer function. Required for IL17A expressing gamma-delta T-cell maturation and development, via binding to regulator loci of BLK to modulate expression. Acts as a positive regulator of odontoblast differentiation during mesenchymal tooth germ formation, expression is repressed during the bell stage by MSX1-mediated inhibition of CTNNB1 signaling. May play a role in hair cell differentiation and follicle morphogenesis. This chain is Lymphoid enhancer-binding factor 1, found in Rattus norvegicus (Rat).